The sequence spans 431 residues: ATP-dependent protease ATPase subunit HslU (431 aa).

ATP contacts are provided by residues V18, 60 to 65 (GVGKTE), D244, E309, and R381.

The protein belongs to the ClpX chaperone family. HslU subfamily. A double ring-shaped homohexamer of HslV is capped on each side by a ring-shaped HslU homohexamer. The assembly of the HslU/HslV complex is dependent on binding of ATP.

It is found in the cytoplasm. ATPase subunit of a proteasome-like degradation complex; this subunit has chaperone activity. The binding of ATP and its subsequent hydrolysis by HslU are essential for unfolding of protein substrates subsequently hydrolyzed by HslV. HslU recognizes the N-terminal part of its protein substrates and unfolds these before they are guided to HslV for hydrolysis. The sequence is that of ATP-dependent protease ATPase subunit HslU from Caulobacter sp. (strain K31).